A 279-amino-acid polypeptide reads, in one-letter code: NADPH-dependent 7-cyano-7-deazaguanine reductase (279 aa).

86 to 88 lines the substrate pocket; that stretch reads VES. 88–89 is a binding site for NADPH; sequence SK. The Thioimide intermediate role is filled by Cys-187. The active-site Proton donor is the Asp-194. 226 to 227 contributes to the substrate binding site; that stretch reads HE. 255–256 serves as a coordination point for NADPH; it reads RG.

The protein belongs to the GTP cyclohydrolase I family. QueF type 2 subfamily. As to quaternary structure, homodimer.

The protein resides in the cytoplasm. The catalysed reaction is 7-aminomethyl-7-carbaguanine + 2 NADP(+) = 7-cyano-7-deazaguanine + 2 NADPH + 3 H(+). Its pathway is tRNA modification; tRNA-queuosine biosynthesis. In terms of biological role, catalyzes the NADPH-dependent reduction of 7-cyano-7-deazaguanine (preQ0) to 7-aminomethyl-7-deazaguanine (preQ1). The protein is NADPH-dependent 7-cyano-7-deazaguanine reductase of Actinobacillus succinogenes (strain ATCC 55618 / DSM 22257 / CCUG 43843 / 130Z).